Consider the following 949-residue polypeptide: L-fucokinase/L-fucose-1-P guanylyltransferase (949 aa).

The tract at residues 25–191 is fucose-1-phosphate guanylyltransferase; that stretch reads DWFCTSDPVG…DFMLQKPSLA (167 aa). The tract at residues 559–949 is L-fucokinase; the sequence is LLRDGLLDGI…SDKGFQVSRS (391 aa).

The protein belongs to the GHMP kinase family. As to quaternary structure, homotetramer. It depends on Mn(2+) as a cofactor. Mg(2+) is required as a cofactor.

The catalysed reaction is L-fucose + ATP = beta-L-fucose 1-phosphate + ADP + H(+). It carries out the reaction beta-L-fucose 1-phosphate + GTP + H(+) = GDP-beta-L-fucose + diphosphate. Functionally, bifunctional enzyme involved in the salvage pathway of GDP-fucose synthesis. Catalyzes two successive reactions, the ATP-dependent phosphorylation of L-fucose to L-fucose 1-phosphate, and its guanylylation to GDP-L-fucose. GDP-fucose is an important fucose donor in the process of fucosylated oligosaccharides formation. The protein is L-fucokinase/L-fucose-1-P guanylyltransferase of Bacteroides fragilis.